Reading from the N-terminus, the 1064-residue chain is Protein NLRC3 (1064 aa).

The NACHT domain maps to 138-459 (RVSLTIGVAG…YCFIHLSLQE (322 aa)). ATP is bound at residue 144–151 (GVAGVGKT). 16 LRR repeats span residues 338–362 (LGHLYRTRLAVQDIELPLPQTLCEL), 570–593 (LSELRHTELACSVEEAMRSGTLAG), 632–662 (LPQLLYCQSLRLDNNQFQDPVMELLGSVLSG), 664–687 (DCRIRKISLAENQIGNKGAKALAR), 692–715 (NRSLITLDLRSNSIGPPGAKALAD), 720–743 (NRTLTSLSLQSNVIKDDGVMCVAE), 748–771 (NQTISMLQLQKNLIGLIGAQQMAD), 776–799 (NRSLKALMFSSNTIGDRGAIALAE), 804–827 (NQILENLDLQSNSISDMGVTVLMR), 832–855 (NQTLSSLNLRENSISPEGAQALTQ), 860–883 (NNTLKHLDLTANLLHDRGAQAIAV), 888–911 (NHSLTHLHLQWNFIQAGAARALGQ), 916–939 (NRTLTTLDLQENAIGDEGASSVAG), 972–995 (NRTLEILDLRGNDVGAAGAKALAN), 1000–1022 (NSSLRRLNLQENSLGMDGAIFVA), and 1028–1051 (NHGLHHINLQGNPIGESAARMISE).

It belongs to the NLRP family. As to quaternary structure, directly interacts (via CARD) with TMEM173/STING; this interaction reduces TMEM173 trafficking to the perinuclear region in response to interferon stimulatory DNA. Also interacts, but to a lesser extent, with TBK1. Interacts with TRAF6; this interaction results in decreased TRAF6 'Lys-63'-linked polyubiquitination, but leaves 'Lys-48'-linked chains unchanged, promoting TRAF6 protein degradation. Interacts with PIK3R1/PIK3R2; this interaction disrupts the association between PIK3R1/PIK3R2 and the p110 catalytic subunit PIK3CA/PIK3CB/PIK3CD and reduces PIK3R1/PIK3R2 activation. Weakly interacts with PYCARD/ASC. Interacts with CASP1 and CASP5. As to expression, expressed in bone marrow-derived macrophages.

The protein resides in the cytoplasm. Negative regulator of the innate immune response. Attenuates signaling pathways activated by Toll-like receptors (TLRs) and the DNA sensor STING/TMEM173 in response to pathogen-associated molecular patterns, such as intracellular poly(dA:dT), but not poly(I:C), or in response to DNA virus infection, including that of Herpes simplex virus 1 (HSV1). May affect TLR4 signaling by acting at the level of TRAF6 ubiquitination, decreasing the activating 'Lys-63'-linked ubiquitination and leaving unchanged the degradative 'Lys-48'-linked ubiquitination. Inhibits the PI3K-AKT-mTOR pathway possibly by directly interacting with the posphatidylinositol 3-kinase regulatory subunit p85 (PIK3R1/PIK3R2) and disrupting the association between PIK3R1/PIK3R2 and the catalytic subunit p110 (PIK3CA/PIK3CB/PIK3CD) and reducing PIK3R1/PIK3R2 activation. Via its regulation of the PI3K-AKT-mTOR pathway, controls cell proliferation, predominantly in intestinal epithelial cells. May also affect NOD1- or NOD2-mediated NF-kappa-B activation. Might also affect the inflammatory response by preventing NLRP3 inflammasome formation, CASP1 cleavage and IL1B maturation. This chain is Protein NLRC3 (Nlrc3), found in Mus musculus (Mouse).